Consider the following 862-residue polypeptide: Cone cGMP-specific 3',5'-cyclic phosphodiesterase subunit alpha' (862 aa).

GAF domains lie at 75–224 and 256–433; these read SMEK…SLVL and DIER…GWSV. 3',5'-cyclic GMP contacts are provided by residues Ser-97, Asn-116, 169–172, and Thr-176; that span reads DKKT. The 334-residue stretch at 486–819 folds into the PDEase domain; sequence DEKDLIRILK…VEWKTRADEY (334 aa). Catalysis depends on His-562, which acts as the Proton donor. A divalent metal cation is bound by residues His-566, His-602, Asp-603, and Asp-723. Basic and acidic residues predominate over residues 830–842; it reads KKKEEEAAAKKAE. Residues 830–862 are disordered; that stretch reads KKKEEEAAAKKAENAAGGGGGGEDGKSKTCIVL. Cys-859 is modified (cysteine methyl ester). Cys-859 is lipidated: S-geranylgeranyl cysteine. Residues 860-862 constitute a propeptide, removed in mature form; sequence IVL.

The protein belongs to the cyclic nucleotide phosphodiesterase family. Composed of two alpha' subunits that are associated with 3 smaller proteins of 11, 13, and 15 kDa. Requires a divalent metal cation as cofactor.

It is found in the cell membrane. It carries out the reaction 3',5'-cyclic GMP + H2O = GMP + H(+). Its function is as follows. As cone-specific cGMP phosphodiesterase, it plays an essential role in light detection and cone phototransduction by rapidly decreasing intracellular levels of cGMP. In Gallus gallus (Chicken), this protein is Cone cGMP-specific 3',5'-cyclic phosphodiesterase subunit alpha' (PDE6C).